We begin with the raw amino-acid sequence, 247 residues long: MADS-box transcription factor 1 (247 aa).

In terms of domain architecture, MADS-box spans 1–61 (MGRGRVELKR…GKLYEFCSTS (61 aa)). The K-box domain maps to 91–181 (ELSSQQEYLK…RQRMEGYQIN (91 aa)).

In terms of tissue distribution, expressed abundantly in the seed coat and to lesser extent in young buds, carpels, petals, and stamen.

It is found in the nucleus. Functionally, probable transcription factor. In Pisum sativum (Garden pea), this protein is MADS-box transcription factor 1.